Consider the following 268-residue polypeptide: Hemolysin C (268 aa).

2 CBS domains span residues M52–L111 and I114–E171.

Belongs to the UPF0053 family.

Bacterial hemolysins are exotoxins that attack blood cell membranes and cause cell rupture by mechanisms not clearly defined. This Brachyspira hyodysenteriae (Treponema hyodysenteriae) protein is Hemolysin C (tlyC).